The chain runs to 883 residues: Glutamate receptor 2 (883 aa).

The signal sequence occupies residues 1-24; that stretch reads MQKIMHISVLLSPVLWGLIFGVSS. Over 25–543 the chain is Extracellular; the sequence is NSIQIGGLFP…GVFSFLDPLA (519 aa). A disulfide bond links Cys-78 and Cys-330. Residues Asn-256, Asn-370, Asn-406, and Asn-413 are each glycosylated (N-linked (GlcNAc...) asparagine). Pro-499, Thr-501, and Arg-506 together coordinate L-glutamate. Residues 544-564 traverse the membrane as a helical segment; it reads YEIWMCIVFAYIGVSVVLFLV. Residues 565–591 lie on the Cytoplasmic side of the membrane; the sequence is SRFSPYEWHTEEFEDGRETQSSESTNE. Positions 592–607 form an intramembrane region, helical; Pore-forming; it reads FGIFNSLWFSLGAFMQ. The stretch at 608-610 is an intramembrane region; sequence QGC. Cys-610 carries S-palmitoyl cysteine lipidation. Topologically, residues 611–616 are cytoplasmic; it reads DISPRS. The helical transmembrane segment at 617–637 threads the bilayer; sequence LSGRIVGGVWWFFTLIIISSY. Over 638–812 the chain is Extracellular; the sequence is TANLAAFLTV…EKTSALSLSN (175 aa). Residues Ser-675 and Thr-676 each coordinate L-glutamate. Ser-683 carries the phosphoserine; by PKC modification. Ser-717 carries the phosphoserine; by PKG modification. An L-glutamate-binding site is contributed by Glu-726. A disulfide bond links Cys-739 and Cys-794. A helical membrane pass occupies residues 813–833; sequence VAGVFYILVGGLGLAMLVALI. Residues 834–883 lie on the Cytoplasmic side of the membrane; sequence EFCYKSRAEAKRMKVAKNAQNINPSSSQNSQNFATYKEGYNVYGIESVKI. Cys-836 carries the S-palmitoyl cysteine lipid modification. Residues Ser-860 and Ser-863 each carry the phosphoserine modification. Positions 867-877 are required for interaction with IQSEC1; that stretch reads ATYKEGYNVYG. Tyr-876 carries the phosphotyrosine modification. Ser-880 is modified (phosphoserine).

It belongs to the glutamate-gated ion channel (TC 1.A.10.1) family. GRIA2 subfamily. Homotetramer or heterotetramer of pore-forming glutamate receptor subunits. Tetramers may be formed by the dimerization of dimers. May interact with MPP4. Forms a ternary complex with GRIP1 and CSPG4. Interacts with ATAD1 in an ATP-dependent manner. ATAD1-catalyzed ATP hydrolysis disrupts binding to ATAD1 and to GRIP1 and leads to AMPAR complex disassembly. Interacts with GRIP1 and GRIP2. Interacts with NSF via its C-terminus. Isoform 1, but not isoform 3, interacts with PICK1. Interacts with CACNG2. Interacts with GRIA1 and SYNDIG1. Part of a complex containing GRIA2, NSF and NAPA and/or NAPB. Interacts with SNX27 (via PDZ domain); the interaction is required for recycling to the plasma membrane when endocytosed and prevent degradation in lysosomes. Interacts with LRFN1. Found in a complex with GRIA1, GRIA3, GRIA4, CNIH2, CNIH3, CACNG2, CACNG3, CACNG4, CACNG5, CACNG7 and CACNG8. Interacts with CACNG5. Interacts with OLFM2. Interacts with AP4B1, AP4E1 and AP4M1; probably indirect it mediates the somatodendritic localization of GRIA2 in neurons. Forms a complex with GRIP1, NSG1 and STX12; controls the intracellular fate of AMPAR and the endosomal sorting of the GRIA2 subunit toward recycling and membrane targeting. Interacts with IQSEC1; the interaction is required for ARF6 activation. Interacts (heterotetramer form) with CNIH2 and CNIH3; this interaction promotes expression at the plasma membrane and extensively modulates their gating properties by slowing deactivation and desensitization kinetics. Palmitoylated. Depalmitoylated upon L-glutamate stimulation. Cys-610 palmitoylation leads to Golgi retention and decreased cell surface expression. In contrast, Cys-836 palmitoylation does not affect cell surface expression but regulates stimulation-dependent endocytosis. Post-translationally, ubiquitinated by RNF167, leading to its degradation. In terms of processing, phosphorylation at Tyr-876 is required for interaction with IQSEC1 and ARF6 activation, which in turn triggers AMPAR internalization for persistent synaptic depression. N-glycosylated.

The protein resides in the cell membrane. It localises to the postsynaptic cell membrane. Its subcellular location is the postsynaptic density membrane. It carries out the reaction Ca(2+)(in) = Ca(2+)(out). The enzyme catalyses Na(+)(in) = Na(+)(out). Its function is as follows. Ionotropic glutamate receptor that functions as a ligand-gated cation channel, gated by L-glutamate and glutamatergic agonists such as alpha-amino-3-hydroxy-5-methyl-4-isoxazolepropionic acid (AMPA), quisqualic acid, and kainic acid. L-glutamate acts as an excitatory neurotransmitter at many synapses in the central nervous system and plays an important role in fast excitatory synaptic transmission. Binding of the excitatory neurotransmitter L-glutamate induces a conformation change, leading to the opening of the cation channel, and thereby converts the chemical signal to an electrical impulse upon entry of monovalent and divalent cations such as sodium and calcium. The receptor then desensitizes rapidly and enters in a transient inactive state, characterized by the presence of bound agonist. In the presence of CACNG4 or CACNG7 or CACNG8, shows resensitization which is characterized by a delayed accumulation of current flux upon continued application of L-glutamate. Through complex formation with NSG1, GRIP1 and STX12 controls the intracellular fate of AMPAR and the endosomal sorting of the GRIA2 subunit toward recycling and membrane targeting. This is Glutamate receptor 2 from Homo sapiens (Human).